A 123-amino-acid chain; its full sequence is Glycophorin-B (123 aa).

Positions 1–19 (MYGKIIFVLLLSEIVSISA) are cleaved as a signal peptide. A helical membrane pass occupies residues 93–113 (VVIILIILCVMAGVIGTILLI).

Belongs to the glycophorin-A family. In terms of assembly, component of the ankyrin-1 complex in the erythrocyte, composed of ANK1, RHCE, RHAG, SLC4A1, EPB42, GYPA, GYPB and AQP1. Interacts (via the N-terminal) with RHAG; this interaction bridges the (RHAG)2(RHCE) heterotrimer with the SLC4A1 Band 3 I dimer complexed with GYPA. The N-terminal extracellular domain is heavily glycosylated on serine and threonine residues.

Its subcellular location is the cell membrane. Functionally, component of the ankyrin-1 complex, a multiprotein complex involved in the stability and shape of the erythrocyte membrane. The sequence is that of Glycophorin-B from Pan troglodytes (Chimpanzee).